The following is a 607-amino-acid chain: Transporter aclS (607 aa).

Transmembrane regions (helical) follow at residues 67 to 87, 91 to 111, 152 to 172, 192 to 212, 221 to 241, 262 to 282, 317 to 337, 364 to 384, 423 to 443, 445 to 465, 500 to 520, and 531 to 551; these read LGGS…AVVL, IAAI…IGFP, LTVV…TAIL, VTTQ…PVLY, LMIG…IWSL, SLGF…SIAL, VFGQ…FGCL, AAAV…NVVD, GCYV…LASA, TFVS…GIHI, GVLP…HSIN, and HLYA…HTLV. A disordered region spans residues 583 to 607; it reads NKDSTEEDSDRSLRRESREVVETKV. Over residues 592–607 the composition is skewed to basic and acidic residues; it reads DRSLRRESREVVETKV.

This sequence belongs to the purine-cytosine permease (2.A.39) family.

The protein resides in the membrane. Its function is as follows. Transporter; part of the gene cluster that mediates the biosynthesis of aspirochlorine (or antibiotic A30641), an unusual halogenated spiro compound with distinctive antifungal properties due to selective inhibition of protein biosynthesis, and which is also active against bacteria, viruses, and murine tumor cells. The sequence is that of Transporter aclS from Aspergillus oryzae (strain ATCC 42149 / RIB 40) (Yellow koji mold).